The following is a 317-amino-acid chain: Protein translocase subunit SecF (317 aa).

6 helical membrane-spanning segments follow: residues 11–31 (FYLL…LFGL), 135–155 (RSIV…AFAF), 166–186 (ICAI…FAIL), 197–217 (LFVT…IVVF), 244–266 (LVRS…FFGG), and 276–298 (LLIG…LVSW).

This sequence belongs to the SecD/SecF family. SecF subfamily. In terms of assembly, forms a complex with SecD. Part of the essential Sec protein translocation apparatus which comprises SecA, SecYEG and auxiliary proteins SecDF. Other proteins may also be involved.

Its subcellular location is the cell membrane. Functionally, part of the Sec protein translocase complex. Interacts with the SecYEG preprotein conducting channel. SecDF uses the proton motive force (PMF) to complete protein translocation after the ATP-dependent function of SecA. The protein is Protein translocase subunit SecF of Thermobaculum terrenum (strain ATCC BAA-798 / CCMEE 7001 / YNP1).